Here is a 951-residue protein sequence, read N- to C-terminus: MPENLPVTTLWPAQTEDFSSRHIGPRPSEIGEMLRVVGASSLDDLIDKTIPAAILDRGDHGIGAALTEQDALARLRQIASRNQVLTSMIGQGYYDTVLPPVIQRNILENPAWYTAYTPYQPEISQGRLEALLNFQTLVADLTGLDIANASLLDEGTACAEAMALAQRVGKSKATAFFVDADTHPQTIAVIRTRAEPLGWDVVVGDPETDLDASSVFGALLSYPGSSGQVRDPRKVIAALHEKGAIAALACDPLALVLLESPGALGADIAIGSMQRYGVPMGAGGPHAAFMATRDAFKRHMPGRLVGVSRDSAGKPAYRLALQTREQHIRREKATSNICTAQALLAIIASMYAVYHGPEGLKAIAARTHRMAAILSAGLKTLGATVETDVFFDTITVQAGASAPQVLARAVASGINLRDAGDGRIGMSCDETTTPETIRAVWAAFAGEGADLSAIEQALDVADALPEGLSRTAPLLTHPVFHAHRSETDLLRYMRALADKDLALDRTMIPLGSCTMKLNATAEMIPITWPEFARIHPFAPADQVQGYTELFAYLERTLCAISGYDAVSLQPNSGAQGEYAGLLAIRGYHRARGDENRDVCLIPASAHGTNPASAQMAGMRVVVVACDENGNVDVEDLKAKIAQHDGRVAAIMITYPSTHGVFEERIVEICELVHAAGGQVYLDGANLNAQVGLARPGLYGADVSHFNLHKTFCIPHGGGGPGMGPIGVGKHLAPYLPGRHGIAVSAAPFGSASILPISAAYIMMMGDEGLRQATTMAILNANYIASRLEGHYPVLYRGTNGFTAHECIVDLRSLKDAVGVTVDDIAKRLIDHGFHAPTVSFPVAGTFMIEPTESEGKGELDRFCDAMIAIRAEIAEVEAGRVGMEDSPLRFAPHTTADLAGDWERSYSREAGCFPGGVDTAKYWSPVGRLDNAWGDRNLVCSCPDISTYVEG.

Lysine 709 carries the post-translational modification N6-(pyridoxal phosphate)lysine.

This sequence belongs to the GcvP family. As to quaternary structure, the glycine cleavage system is composed of four proteins: P, T, L and H. Requires pyridoxal 5'-phosphate as cofactor.

It catalyses the reaction N(6)-[(R)-lipoyl]-L-lysyl-[glycine-cleavage complex H protein] + glycine + H(+) = N(6)-[(R)-S(8)-aminomethyldihydrolipoyl]-L-lysyl-[glycine-cleavage complex H protein] + CO2. Functionally, the glycine cleavage system catalyzes the degradation of glycine. The P protein binds the alpha-amino group of glycine through its pyridoxal phosphate cofactor; CO(2) is released and the remaining methylamine moiety is then transferred to the lipoamide cofactor of the H protein. This is Glycine dehydrogenase (decarboxylating) from Gluconobacter oxydans (strain 621H) (Gluconobacter suboxydans).